We begin with the raw amino-acid sequence, 346 residues long: Holliday junction branch migration complex subunit RuvB (346 aa).

Residues Met-1–Ala-11 show a composition bias toward polar residues. The segment at Met-1 to Ala-20 is disordered. A large ATPase domain (RuvB-L) region spans residues Met-1–Tyr-183. Residues Ile-22, Arg-23, Gly-64, Lys-67, Thr-68, Thr-69, Glu-130–Phe-132, Arg-173, Tyr-183, and Arg-220 each bind ATP. A Mg(2+)-binding site is contributed by Thr-68. Residues Ser-184–Lys-254 form a small ATPAse domain (RuvB-S) region. A head domain (RuvB-H) region spans residues Pro-257–Phe-346. Arg-293, Arg-312, and Arg-317 together coordinate DNA.

It belongs to the RuvB family. In terms of assembly, homohexamer. Forms an RuvA(8)-RuvB(12)-Holliday junction (HJ) complex. HJ DNA is sandwiched between 2 RuvA tetramers; dsDNA enters through RuvA and exits via RuvB. An RuvB hexamer assembles on each DNA strand where it exits the tetramer. Each RuvB hexamer is contacted by two RuvA subunits (via domain III) on 2 adjacent RuvB subunits; this complex drives branch migration. In the full resolvosome a probable DNA-RuvA(4)-RuvB(12)-RuvC(2) complex forms which resolves the HJ.

Its subcellular location is the cytoplasm. It catalyses the reaction ATP + H2O = ADP + phosphate + H(+). The RuvA-RuvB-RuvC complex processes Holliday junction (HJ) DNA during genetic recombination and DNA repair, while the RuvA-RuvB complex plays an important role in the rescue of blocked DNA replication forks via replication fork reversal (RFR). RuvA specifically binds to HJ cruciform DNA, conferring on it an open structure. The RuvB hexamer acts as an ATP-dependent pump, pulling dsDNA into and through the RuvAB complex. RuvB forms 2 homohexamers on either side of HJ DNA bound by 1 or 2 RuvA tetramers; 4 subunits per hexamer contact DNA at a time. Coordinated motions by a converter formed by DNA-disengaged RuvB subunits stimulates ATP hydrolysis and nucleotide exchange. Immobilization of the converter enables RuvB to convert the ATP-contained energy into a lever motion, pulling 2 nucleotides of DNA out of the RuvA tetramer per ATP hydrolyzed, thus driving DNA branch migration. The RuvB motors rotate together with the DNA substrate, which together with the progressing nucleotide cycle form the mechanistic basis for DNA recombination by continuous HJ branch migration. Branch migration allows RuvC to scan DNA until it finds its consensus sequence, where it cleaves and resolves cruciform DNA. The chain is Holliday junction branch migration complex subunit RuvB from Xanthomonas campestris pv. campestris (strain 8004).